A 276-amino-acid chain; its full sequence is Large ribosomal subunit protein uL2 (276 aa).

Residues 224 to 276 (AMNPVDHPLGGGEGKSSGGRHPVTPWGKPTKGYKTRNKKKPSSKLIVKRRGQK) are disordered. Positions 254–276 (KGYKTRNKKKPSSKLIVKRRGQK) are enriched in basic residues.

It belongs to the universal ribosomal protein uL2 family. As to quaternary structure, part of the 50S ribosomal subunit. Forms a bridge to the 30S subunit in the 70S ribosome.

Functionally, one of the primary rRNA binding proteins. Required for association of the 30S and 50S subunits to form the 70S ribosome, for tRNA binding and peptide bond formation. It has been suggested to have peptidyltransferase activity; this is somewhat controversial. Makes several contacts with the 16S rRNA in the 70S ribosome. The sequence is that of Large ribosomal subunit protein uL2 from Solidesulfovibrio magneticus (strain ATCC 700980 / DSM 13731 / RS-1) (Desulfovibrio magneticus).